The sequence spans 395 residues: Zinc finger protein 200 (395 aa).

A disordered region spans residues 157 to 208 (VNGSNPEGEDPEREPVENEDYREKSSDDDEMDSSLVSQQPPDNQEKERLNTS). A compositionally biased stretch (basic and acidic residues) spans 169 to 181 (REPVENEDYREKS). The interaction with PRMT3 stretch occupies residues 246–395 (RRTRRWYTCP…HSACKTRKQK (150 aa)). 5 consecutive C2H2-type zinc fingers follow at residues 252–274 (YTCP…QRTH), 280–302 (YDCN…ERIH), 308–330 (YSCS…EGIH), 336–358 (FKCP…LQSH), and 364–386 (YGCK…EKTH).

In terms of assembly, interacts (via C-terminus) with PRMT3 (via zinc-finger); the interaction is direct and required to localize protein arginine N-methyltransferase PRMT3 to the nucleus and inhibit its proteasomal degradation. As to expression, highly expressed in testis, weakly expressed in spleen, thymus, prostate, ovary, small intestine colon and peripheral blood leukocytes.

Its subcellular location is the nucleus. Functionally, localizes protein arginine N-methyltransferase PRMT3 to the nucleus. The polypeptide is Zinc finger protein 200 (ZNF200) (Homo sapiens (Human)).